Reading from the N-terminus, the 504-residue chain is Pentatricopeptide repeat-containing protein At5g16640, mitochondrial (504 aa).

Residues 1–43 (MRRSISSKAKSFLHRNLLYSGNSGTSPSSSFSICGFCFSRRAY) constitute a mitochondrion transit peptide. 13 PPR repeats span residues 45-79 (NGSD…RPLP), 80-114 (SIAD…GIPH), 115-149 (NLCT…GHEP), 150-184 (SIVT…GYKP), 185-219 (NVVI…GIGP), 220-254 (DVVT…EIYP), 255-289 (DVFT…SLDP), 290-324 (DIVT…GCFP), 325-359 (DVVT…GVVR), 360-394 (NTVT…GVHP), 395-429 (NIIT…GMDA), 430-464 (DIVT…GLMP), and 465-499 (DIWT…GILP).

The protein belongs to the PPR family. P subfamily.

The protein localises to the mitochondrion. The polypeptide is Pentatricopeptide repeat-containing protein At5g16640, mitochondrial (Arabidopsis thaliana (Mouse-ear cress)).